The sequence spans 958 residues: N-terminal acetyltransferase B complex subunit NAA25 homolog (958 aa).

TPR repeat units follow at residues 7-42, 78-111, and 320-353; these read AVLERRLRPIYDSLDSQQFKKALSDCDKVLKKHPNT, ELTLQAFVHCYRDSNQHMKVVTLYERIIQVDPSE, and FFAYKQIGKLTKQIPDMDDMTSIFGEQVDKMLEY.

It belongs to the MDM20/NAA25 family. Component of the N-terminal acetyltransferase B (NatB) complex. Interacts with acer-1. As to expression, expressed in germline and somatic cells.

The protein localises to the cytoplasm. It localises to the nucleus. It is found in the chromosome. Non-catalytic subunit of the NatB complex which catalyzes acetylation of the N-terminal methionine residues of proteins beginning with Met-Asp or Met-Glu. Required for chromosome organization and arrangement; specifically for assembly of the central region components of the synaptonemal complex onto chromosomes during meiosis and for DNA double stranded break formation and repair. Acts downstream of xnd-1 to regulate levels of histone acetylation in germ and somatic cell nuclei by controlling acetyl-CoA production through antagonizing the acetyl-CoA hydrolase activity of acer-1. This Caenorhabditis elegans protein is N-terminal acetyltransferase B complex subunit NAA25 homolog.